Reading from the N-terminus, the 170-residue chain is Calcineurin subunit B type 2 (170 aa).

4 consecutive EF-hand domains span residues 18–46 (DEIRRLGKRFRKLDLDNSGALSVDEFMSL), 50–85 (QQNPLVQRVIDIFDADGNGEVDFKEFIQGVSQFSVK), 87–122 (DKLSKLRFAFRIYDMDNDGYISNGELFQVLKMMVGN), and 128–163 (QLQQIVDKTIGFADKDEDGKISFDEFCSVVGNTDIH). The Ca(2+) site is built by D31, D33, S35, E42, D63, D65, N67, E69, E74, D100, D102, D104, Y106, E111, D141, D143, D145, K147, and E152. Residue S35 is modified to Phosphoserine.

This sequence belongs to the calcineurin regulatory subunit family. In terms of assembly, composed of a catalytic subunit (A) and a regulatory subunit (B). Interacts with sra.

Calcineurin is a calcium-binding and calmodulin-binding protein found in all cells from yeast to mammals, and a calcium-dependent, calmodulin-stimulated protein phosphatase. The chain is Calcineurin subunit B type 2 (CanB2) from Drosophila melanogaster (Fruit fly).